Consider the following 215-residue polypeptide: LexA repressor (215 aa).

Positions 28 to 48 (RAEIAAELGFSSPNAAEEHLR) form a DNA-binding region, H-T-H motif. Catalysis depends on for autocatalytic cleavage activity residues S133 and K170.

This sequence belongs to the peptidase S24 family. Homodimer.

It carries out the reaction Hydrolysis of Ala-|-Gly bond in repressor LexA.. Represses a number of genes involved in the response to DNA damage (SOS response), including recA and lexA. In the presence of single-stranded DNA, RecA interacts with LexA causing an autocatalytic cleavage which disrupts the DNA-binding part of LexA, leading to derepression of the SOS regulon and eventually DNA repair. The chain is LexA repressor from Burkholderia cenocepacia (strain HI2424).